We begin with the raw amino-acid sequence, 380 residues long: 4-hydroxy-3-methylbut-2-en-1-yl diphosphate synthase (flavodoxin) (380 aa).

[4Fe-4S] cluster-binding residues include cysteine 273, cysteine 276, cysteine 308, and glutamate 315.

It belongs to the IspG family. It depends on [4Fe-4S] cluster as a cofactor.

The catalysed reaction is (2E)-4-hydroxy-3-methylbut-2-enyl diphosphate + oxidized [flavodoxin] + H2O + 2 H(+) = 2-C-methyl-D-erythritol 2,4-cyclic diphosphate + reduced [flavodoxin]. The protein operates within isoprenoid biosynthesis; isopentenyl diphosphate biosynthesis via DXP pathway; isopentenyl diphosphate from 1-deoxy-D-xylulose 5-phosphate: step 5/6. Functionally, converts 2C-methyl-D-erythritol 2,4-cyclodiphosphate (ME-2,4cPP) into 1-hydroxy-2-methyl-2-(E)-butenyl 4-diphosphate. This Leifsonia xyli subsp. xyli (strain CTCB07) protein is 4-hydroxy-3-methylbut-2-en-1-yl diphosphate synthase (flavodoxin).